We begin with the raw amino-acid sequence, 111 residues long: Disintegrin subunit alpha (111 aa).

The first 20 residues, 1–20 (MIQVLLVTICLAVFPYQGSS), serve as a signal peptide directing secretion. The propeptide occupies 21 to 44 (IILESGNVNDYEVVYPRKITPLPK). Residues 45 to 111 (GAVQPKNPCC…GDCPRKHFYA (67 aa)) enclose the Disintegrin domain. Disulfide bonds link cysteine 53–cysteine 76, cysteine 67–cysteine 73, cysteine 72–cysteine 97, and cysteine 85–cysteine 104. A Cell attachment site motif is present at residues 89-91 (RGD). Residues 110-111 (YA) constitute a propeptide that is removed on maturation.

This sequence belongs to the disintegrin family. Dimeric disintegrin subfamily. In terms of assembly, heterodimer with subunit beta; disulfide-linked. As to expression, expressed by the venom gland.

The protein localises to the secreted. Acts by binding to alpha-IIb/beta-3 (ITGA2B/ITGB3) on the platelet surface and inhibits both ADP-induced platelet aggregation and platelet aggregate dissociation in human platelet-rich plasma. The protein is Disintegrin subunit alpha of Agkistrodon piscivorus leucostoma (Western cottonmouth).